A 479-amino-acid polypeptide reads, in one-letter code: tRNA modification GTPase MnmE (479 aa).

(6S)-5-formyl-5,6,7,8-tetrahydrofolate is bound by residues arginine 30, glutamate 91, and lysine 130. The TrmE-type G domain occupies 226–402 (GFRIVLTGLP…VLKDLVKEFA (177 aa)). Asparagine 236 provides a ligand contact to K(+). GTP contacts are provided by residues 236 to 241 (NVGKSS), 255 to 261 (TDIPGTT), and 280 to 283 (DTAG). Mg(2+) is bound at residue serine 240. K(+)-binding residues include threonine 255, isoleucine 257, and threonine 260. Threonine 261 contacts Mg(2+). Lysine 479 is a binding site for (6S)-5-formyl-5,6,7,8-tetrahydrofolate.

Belongs to the TRAFAC class TrmE-Era-EngA-EngB-Septin-like GTPase superfamily. TrmE GTPase family. In terms of assembly, homodimer. Heterotetramer of two MnmE and two MnmG subunits. It depends on K(+) as a cofactor.

It is found in the cytoplasm. In terms of biological role, exhibits a very high intrinsic GTPase hydrolysis rate. Involved in the addition of a carboxymethylaminomethyl (cmnm) group at the wobble position (U34) of certain tRNAs, forming tRNA-cmnm(5)s(2)U34. This Bdellovibrio bacteriovorus (strain ATCC 15356 / DSM 50701 / NCIMB 9529 / HD100) protein is tRNA modification GTPase MnmE.